The sequence spans 238 residues: Large ribosomal subunit protein uL2 (238 aa).

A disordered region spans residues 199–238; it reads PHGGGLHQSVSRSSTVARNTPPGRKVGHIAARRTGRRDRK. Residues 206 to 216 show a composition bias toward polar residues; the sequence is QSVSRSSTVAR. The segment covering 223 to 238 has biased composition (basic residues); it reads KVGHIAARRTGRRDRK.

Belongs to the universal ribosomal protein uL2 family. In terms of assembly, part of the 50S ribosomal subunit. Forms a bridge to the 30S subunit in the 70S ribosome.

In terms of biological role, one of the primary rRNA binding proteins. Required for association of the 30S and 50S subunits to form the 70S ribosome, for tRNA binding and peptide bond formation. It has been suggested to have peptidyltransferase activity; this is somewhat controversial. Makes several contacts with the 16S rRNA in the 70S ribosome. The polypeptide is Large ribosomal subunit protein uL2 (Metallosphaera sedula (strain ATCC 51363 / DSM 5348 / JCM 9185 / NBRC 15509 / TH2)).